Reading from the N-terminus, the 593-residue chain is Numb-related protein 1 (593 aa).

4 disordered regions span residues 1-97, 235-278, 331-375, and 493-581; these read MSAS…WQPD, TAQV…NSRS, LRQG…FGTQ, and MSMS…DPFD. Residue serine 17 is modified to Phosphoserine; by PKC. Positions 27–37 are enriched in polar residues; it reads QNSLVSEQQPS. The span at 64–74 shows a compositional bias: basic residues; it reads RSLRLPKKRRD. The residue at position 65 (serine 65) is a Phosphoserine; by PKC. The PID domain maps to 102–255; sequence RTGTCCFNVK…STSSTPPKDI (154 aa). 3 stretches are compositionally biased toward polar residues: residues 236-251, 261-278, and 354-364; these read AQVNVQSAQESTSSTP, EDNTSEGTSTQNPSNSRS, and SLRTVSNNPTE. Residues 493 to 511 are compositionally biased toward low complexity; it reads MSMSPTSPSSDPPSTSSYS. The segment covering 516 to 528 has biased composition (pro residues); sequence SGPPPAHAPPPLP. Residues 532-565 are compositionally biased toward polar residues; sequence AVSNGSPSIYQQQLQQANSTRNSPAGINWNSSPN.

As to quaternary structure, interacts with pkc-3. In terms of tissue distribution, expressed in cells comprising the intestine, pharyngeal cells, the anal sphincter and depressor muscles.

The protein resides in the cytoplasm. The protein localises to the cell cortex. It is found in the cytoskeleton. It localises to the membrane. Functionally, involved in the tethering and targeting of pkc-3 to modulate the intracellular distribution of the kinase. The complex formed with pkc-3 complexes are likely to be involved in assembly, maintenance, and/or regulation of protein complexes that execute asymmetric and/or polarized cell functions. In Caenorhabditis elegans, this protein is Numb-related protein 1.